A 293-amino-acid polypeptide reads, in one-letter code: RNA-binding Raly-like protein (293 aa).

The 72-residue stretch at 21–92 (SRVFIGNLNT…QPLDINMAGE (72 aa)) folds into the RRM domain. Disordered regions lie at residues 159–195 (PRAA…KLKS) and 245–293 (QDEC…LQIK). Residues 176–192 (KGGSRSAVSGSSSSGSK) are compositionally biased toward low complexity. Residues 192 to 254 (KLKSDELQTI…QDECVSENAD (63 aa)) are a coiled coil. Residues 259 to 284 (EPAEGAPDADGEELTDGVEEDFDEDG) are compositionally biased toward acidic residues.

Belongs to the RRM HNRPC family. RALY subfamily.

The protein is RNA-binding Raly-like protein (RALYL) of Bos taurus (Bovine).